The following is a 742-amino-acid chain: Polyribonucleotide nucleotidyltransferase (742 aa).

The Mg(2+) site is built by D515 and D521. The 60-residue stretch at 581–640 folds into the KH domain; the sequence is PRIITITIPVDKIGEVIGPKGKIINQIQDDTGASISIEDDGTIYIGATNGEAAEAAKNAV. The S1 motif domain maps to 652 to 724; sequence GERYLGTVVK…DRGKLSLVPV (73 aa).

The protein belongs to the polyribonucleotide nucleotidyltransferase family. The cofactor is Mg(2+).

The protein localises to the cytoplasm. It carries out the reaction RNA(n+1) + phosphate = RNA(n) + a ribonucleoside 5'-diphosphate. In terms of biological role, involved in mRNA degradation. Catalyzes the phosphorolysis of single-stranded polyribonucleotides processively in the 3'- to 5'-direction. The protein is Polyribonucleotide nucleotidyltransferase of Nocardioides sp. (strain ATCC BAA-499 / JS614).